Consider the following 317-residue polypeptide: Acetyl-coenzyme A carboxylase carboxyl transferase subunit alpha (317 aa).

One can recognise a CoA carboxyltransferase C-terminal domain in the interval 39–293 (KLEDKNRKLT…KDALGASLER (255 aa)).

This sequence belongs to the AccA family. As to quaternary structure, acetyl-CoA carboxylase is a heterohexamer composed of biotin carboxyl carrier protein (AccB), biotin carboxylase (AccC) and two subunits each of ACCase subunit alpha (AccA) and ACCase subunit beta (AccD).

The protein resides in the cytoplasm. It catalyses the reaction N(6)-carboxybiotinyl-L-lysyl-[protein] + acetyl-CoA = N(6)-biotinyl-L-lysyl-[protein] + malonyl-CoA. It participates in lipid metabolism; malonyl-CoA biosynthesis; malonyl-CoA from acetyl-CoA: step 1/1. In terms of biological role, component of the acetyl coenzyme A carboxylase (ACC) complex. First, biotin carboxylase catalyzes the carboxylation of biotin on its carrier protein (BCCP) and then the CO(2) group is transferred by the carboxyltransferase to acetyl-CoA to form malonyl-CoA. In Chromohalobacter salexigens (strain ATCC BAA-138 / DSM 3043 / CIP 106854 / NCIMB 13768 / 1H11), this protein is Acetyl-coenzyme A carboxylase carboxyl transferase subunit alpha.